The chain runs to 326 residues: tRNA uridine(34) hydroxylase (326 aa).

The Rhodanese domain maps to 122 to 218; the sequence is EENRCLVLDV…YGQAVGTGKW (97 aa). The active-site Cysteine persulfide intermediate is the cysteine 178.

This sequence belongs to the TrhO family.

The catalysed reaction is uridine(34) in tRNA + AH2 + O2 = 5-hydroxyuridine(34) in tRNA + A + H2O. Functionally, catalyzes oxygen-dependent 5-hydroxyuridine (ho5U) modification at position 34 in tRNAs. The chain is tRNA uridine(34) hydroxylase from Chlamydia abortus (strain DSM 27085 / S26/3) (Chlamydophila abortus).